We begin with the raw amino-acid sequence, 595 residues long: FERM domain-containing protein 3 (595 aa).

An FERM domain is found at 32-312 (MKCTIRLLDD…ENQAFYKYAK (281 aa)). The chain crosses the membrane as a helical span at residues 529–549 (LLVVGLGLLLFVFPLLLLLLE).

It localises to the membrane. Its function is as follows. Putative tumor suppressor gene that may be implicated in the origin and progression of lung cancer. This chain is FERM domain-containing protein 3 (Frmd3), found in Mus musculus (Mouse).